Reading from the N-terminus, the 85-residue chain is Large ribosomal subunit protein eL43 (85 aa).

Zn(2+) is bound by residues cysteine 32, cysteine 35, cysteine 50, and cysteine 53. The C4-type zinc finger occupies 32 to 53; sequence CTFCGKTKMKRRAVGIWHCGSC.

The protein belongs to the eukaryotic ribosomal protein eL43 family. In terms of assembly, component of the large ribosomal subunit.

The protein resides in the cytoplasm. Component of the large ribosomal subunit. The ribosome is a large ribonucleoprotein complex responsible for the synthesis of proteins in the cell. The polypeptide is Large ribosomal subunit protein eL43 (rpl37a) (Myxine glutinosa (Atlantic hagfish)).